A 66-amino-acid polypeptide reads, in one-letter code: Large ribosomal subunit protein bL35 (66 aa).

It belongs to the bacterial ribosomal protein bL35 family. In terms of assembly, part of the 50S ribosomal subunit. Contacts proteins L15 and L33.

Binds the 23S rRNA. This chain is Large ribosomal subunit protein bL35 (rpmI), found in Deinococcus radiodurans (strain ATCC 13939 / DSM 20539 / JCM 16871 / CCUG 27074 / LMG 4051 / NBRC 15346 / NCIMB 9279 / VKM B-1422 / R1).